Reading from the N-terminus, the 181-residue chain is Acireductone dioxygenase (181 aa).

Fe(2+)-binding residues include His97, His99, Glu103, and His141. His97, His99, Glu103, and His141 together coordinate Ni(2+).

The protein belongs to the acireductone dioxygenase (ARD) family. As to quaternary structure, monomer. Fe(2+) serves as cofactor. It depends on Ni(2+) as a cofactor.

It catalyses the reaction 1,2-dihydroxy-5-(methylsulfanyl)pent-1-en-3-one + O2 = 3-(methylsulfanyl)propanoate + CO + formate + 2 H(+). The enzyme catalyses 1,2-dihydroxy-5-(methylsulfanyl)pent-1-en-3-one + O2 = 4-methylsulfanyl-2-oxobutanoate + formate + 2 H(+). It participates in amino-acid biosynthesis; L-methionine biosynthesis via salvage pathway; L-methionine from S-methyl-5-thio-alpha-D-ribose 1-phosphate: step 5/6. In terms of biological role, catalyzes 2 different reactions between oxygen and the acireductone 1,2-dihydroxy-3-keto-5-methylthiopentene (DHK-MTPene) depending upon the metal bound in the active site. Fe-containing acireductone dioxygenase (Fe-ARD) produces formate and 2-keto-4-methylthiobutyrate (KMTB), the alpha-ketoacid precursor of methionine in the methionine recycle pathway. Ni-containing acireductone dioxygenase (Ni-ARD) produces methylthiopropionate, carbon monoxide and formate, and does not lie on the methionine recycle pathway. The polypeptide is Acireductone dioxygenase (Pseudomonas fluorescens (strain ATCC BAA-477 / NRRL B-23932 / Pf-5)).